The chain runs to 570 residues: Multidrug and toxin extrusion protein 1 (570 aa).

Residue Met-1 is modified to N-acetylmethionine. Over 1 to 37 (MEAPEEPAPVRGGPEATLEVRGSRCLRLSAFREELRA) the chain is Cytoplasmic. Residues 38–58 (LLVLAGPAFLVQLMVFLISFI) traverse the membrane as a helical segment. Residues 59–72 (SSVFCGHLGKLELD) are Extracellular-facing. Residues 73 to 93 (AVTLAIAVINVTGVSVGFGLS) form a helical membrane-spanning segment. Residues 94 to 123 (SACDTLISQTYGSQNLKHVGVILQRSALVL) are Cytoplasmic-facing. The helical transmembrane segment at 124-144 (LLCCFPCWALFLNTQHILLLF) threads the bilayer. The Extracellular segment spans residues 145–152 (RQDPDVSR). A helical membrane pass occupies residues 153–173 (LTQTYVTIFIPALPATFLYML). Topologically, residues 174–176 (QVK) are cytoplasmic. The helical transmembrane segment at 177 to 197 (YLLNQGIVLPQIVTGVAANLV) threads the bilayer. Topologically, residues 198-216 (NALANYLFLHQLHLGVIGS) are extracellular. Residues 217–237 (ALANLISQYTLALLLFLYILG) form a helical membrane-spanning segment. Residues 238–256 (KKLHQATWGGWSLECLQDW) are Cytoplasmic-facing. Residues 257–276 (ASFLRLAIPSMLMLCMEWWA) form a helical membrane-spanning segment. Residues 277–295 (YEVGSFLSGILGMVELGAQ) lie on the Extracellular side of the membrane. Residues 296-316 (SIVYELAIIVYMVPAGFSVAA) traverse the membrane as a helical segment. Over 317–336 (SVRVGNALGAGDMEQARKSS) the chain is Cytoplasmic. A helical transmembrane segment spans residues 337-357 (TVSLLITVLFAVAFSVLLLSC). Residues 358-370 (KDHVGYIFTTDRD) are Extracellular-facing. A helical membrane pass occupies residues 371 to 391 (IINLVAQVVPIYAVSHLFEAL). Residues 392–408 (ACTSGGVLRGSGNQKVG) are Cytoplasmic-facing. The helical transmembrane segment at 409-429 (AIVNTIGYYVVGLPIGIALMF) threads the bilayer. At 430-437 (ATTLGVMG) the chain is on the extracellular side. The helical transmembrane segment at 438-458 (LWSGIIICTVFQAVCFLGFII) threads the bilayer. Residues 459–546 (QLNWKKACQQ…LSRKQLVLRR (88 aa)) lie on the Cytoplasmic side of the membrane. The interval 508-534 (DVGKTGEPQSDQQMRQEEPLPEHPQDG) is disordered. Residues 521–533 (MRQEEPLPEHPQD) are compositionally biased toward basic and acidic residues. The helical transmembrane segment at 547–567 (GLLLLGVFLILLVGILVRFYV) threads the bilayer. The Extracellular segment spans residues 568–570 (RIQ).

This sequence belongs to the multi antimicrobial extrusion (MATE) (TC 2.A.66.1) family. As to expression, widely expressed. The highest expression is found in adrenal gland, and to a lower extent in liver, skeletal muscle and kidney. In testis, primarily localized throughout the adluminal compartment of the seminiferous tubules with expression at the peritubular myoid cells and Leydig cells.

It is found in the cell membrane. The protein resides in the apical cell membrane. The enzyme catalyses thiamine(out) + H(+)(in) = thiamine(in) + H(+)(out). It carries out the reaction estrone 3-sulfate(in) + H(+)(out) = estrone 3-sulfate(out) + H(+)(in). The catalysed reaction is creatinine(in) + H(+)(out) = creatinine(out) + H(+)(in). It catalyses the reaction agmatine(in) + H(+)(out) = agmatine(out) + H(+)(in). Multidrug efflux pump that functions as a H(+)/organic cation antiporter. Plays a physiological role in the excretion of cationic compounds including endogenous metabolites, drugs, toxins through the kidney and liver, into urine and bile respectively. Mediates the efflux of endogenous compounds such as creatinine, vitamin B1/thiamine, agmatine and estrone-3-sulfate. May also contribute to regulate the transport of cationic compounds in testis across the blood-testis-barrier. This chain is Multidrug and toxin extrusion protein 1, found in Homo sapiens (Human).